The sequence spans 297 residues: PIH1 domain-containing protein 1 (297 aa).

The protein belongs to the PIH1 family.

The protein localises to the nucleus. Its function is as follows. Involved in the assembly of C/D box small nucleolar ribonucleoprotein (snoRNP) particles. Recruits the SWI/SNF complex to the core promoter of rRNA genes and enhances pre-rRNA transcription. Mediates interaction of TELO2 with the R2TP complex which is necessary for the stability of MTOR and SMG1. Positively regulates the assembly and activity of the mTORC1 complex. This chain is PIH1 domain-containing protein 1 (pih1d1), found in Xenopus laevis (African clawed frog).